The chain runs to 78 residues: Acyl carrier protein (78 aa).

In terms of domain architecture, Carrier spans 2–77; the sequence is SDIEQRVKKI…QAIDYVNANL (76 aa). Ser37 carries the post-translational modification O-(pantetheine 4'-phosphoryl)serine.

This sequence belongs to the acyl carrier protein (ACP) family. Post-translationally, 4'-phosphopantetheine is transferred from CoA to a specific serine of apo-ACP by AcpS. This modification is essential for activity because fatty acids are bound in thioester linkage to the sulfhydryl of the prosthetic group.

Its subcellular location is the cytoplasm. Its pathway is lipid metabolism; fatty acid biosynthesis. Carrier of the growing fatty acid chain in fatty acid biosynthesis. The protein is Acyl carrier protein of Methylobacillus flagellatus (strain ATCC 51484 / DSM 6875 / VKM B-1610 / KT).